The primary structure comprises 153 residues: UPF0225 protein ETA_15740 (153 aa).

This sequence belongs to the UPF0225 family.

This Erwinia tasmaniensis (strain DSM 17950 / CFBP 7177 / CIP 109463 / NCPPB 4357 / Et1/99) protein is UPF0225 protein ETA_15740.